The chain runs to 453 residues: RuvB-like helicase 1 (453 aa).

71–78 contacts ATP; the sequence is GGPGTGKT.

The protein belongs to the RuvB family. In terms of assembly, may form heterododecamers with RVB2. Component of the SWR1 chromatin remodeling complex, the INO80 chromatin remodeling complex, and of the R2TP complex.

It is found in the nucleus. The enzyme catalyses ATP + H2O = ADP + phosphate + H(+). DNA helicase which participates in several chromatin remodeling complexes, including the SWR1 and the INO80 complexes. The SWR1 complex mediates the ATP-dependent exchange of histone H2A for the H2A variant HZT1 leading to transcriptional regulation of selected genes by chromatin remodeling. The INO80 complex remodels chromatin by shifting nucleosomes and is involved in DNA repair. Also involved in pre-rRNA processing. The polypeptide is RuvB-like helicase 1 (RVB1) (Yarrowia lipolytica (strain CLIB 122 / E 150) (Yeast)).